A 330-amino-acid chain; its full sequence is Ketol-acid reductoisomerase (NADP(+)) (330 aa).

Residues 1-181 enclose the KARI N-terminal Rossmann domain; sequence MKVFYDSDFK…GLSRAGVIQT (181 aa). Residues 24 to 27, arginine 47, serine 52, and 82 to 85 contribute to the NADP(+) site; these read YGSQ and DELQ. Histidine 107 is a catalytic residue. Residue glycine 133 participates in NADP(+) binding. Residues 182–327 form the KARI C-terminal knotted domain; sequence TFKEETETDL…AKLRKMCGLE (146 aa). 4 residues coordinate Mg(2+): aspartate 190, glutamate 194, glutamate 226, and glutamate 230. Position 251 (serine 251) interacts with substrate.

It belongs to the ketol-acid reductoisomerase family. It depends on Mg(2+) as a cofactor.

The catalysed reaction is (2R)-2,3-dihydroxy-3-methylbutanoate + NADP(+) = (2S)-2-acetolactate + NADPH + H(+). It carries out the reaction (2R,3R)-2,3-dihydroxy-3-methylpentanoate + NADP(+) = (S)-2-ethyl-2-hydroxy-3-oxobutanoate + NADPH + H(+). The protein operates within amino-acid biosynthesis; L-isoleucine biosynthesis; L-isoleucine from 2-oxobutanoate: step 2/4. It functions in the pathway amino-acid biosynthesis; L-valine biosynthesis; L-valine from pyruvate: step 2/4. In terms of biological role, involved in the biosynthesis of branched-chain amino acids (BCAA). Catalyzes an alkyl-migration followed by a ketol-acid reduction of (S)-2-acetolactate (S2AL) to yield (R)-2,3-dihydroxy-isovalerate. In the isomerase reaction, S2AL is rearranged via a Mg-dependent methyl migration to produce 3-hydroxy-3-methyl-2-ketobutyrate (HMKB). In the reductase reaction, this 2-ketoacid undergoes a metal-dependent reduction by NADPH to yield (R)-2,3-dihydroxy-isovalerate. The sequence is that of Ketol-acid reductoisomerase (NADP(+)) from Methanococcus maripaludis (strain DSM 14266 / JCM 13030 / NBRC 101832 / S2 / LL).